The chain runs to 820 residues: DNA mismatch repair protein MutS (820 aa).

618–625 contacts ATP; that stretch reads GPNMAGKS.

It belongs to the DNA mismatch repair MutS family.

Its function is as follows. This protein is involved in the repair of mismatches in DNA. It is possible that it carries out the mismatch recognition step. This protein has a weak ATPase activity. The protein is DNA mismatch repair protein MutS of Chlamydia trachomatis serovar A (strain ATCC VR-571B / DSM 19440 / HAR-13).